A 177-amino-acid chain; its full sequence is Small ribosomal subunit protein uS5 (177 aa).

Residues 21 to 84 (LLDRVVKIKR…KQASRSMIHV (64 aa)) enclose the S5 DRBM domain.

The protein belongs to the universal ribosomal protein uS5 family. As to quaternary structure, part of the 30S ribosomal subunit. Contacts proteins S4 and S8.

Its function is as follows. With S4 and S12 plays an important role in translational accuracy. In terms of biological role, located at the back of the 30S subunit body where it stabilizes the conformation of the head with respect to the body. This is Small ribosomal subunit protein uS5 from Rhodopirellula baltica (strain DSM 10527 / NCIMB 13988 / SH1).